Reading from the N-terminus, the 1216-residue chain is Protein WWC3 (1216 aa).

Residues 1 to 63 form a disordered region; sequence MPWLSGGRRR…RESAELPLPA (63 aa). Residues 21–51 show a composition bias toward pro residues; sequence EPPPSAQPQREPPPAPPAAVPTPPAPSAPPP. WW domains lie at 59–92 and 106–139; these read LPLP…DPRD and DELP…DPRE. 2 coiled-coil regions span residues 164–250 and 354–468; these read KEIY…TLQE and DRVR…EATR. 3 disordered regions span residues 487-508, 546-612, and 634-668; these read VSSG…SSRG, GRDA…ADSC, and DLPG…VGGT. Low complexity predominate over residues 570–598; it reads PQSLASLSSRSSLSSLSPPSSPLDTPFLP. The C2 domain occupies 722–847; sequence SNGDPQIHVG…SLSEMQLRWH (126 aa). Residues 885-936 adopt a coiled-coil conformation; the sequence is DAVTVLLARTTAQLQAVERELAEERAKLEYTEEEVLEMERKEEQAEAISERS. An interaction with PRKCZ region spans residues 1060–1079; the sequence is SPFVRNTLERRTLRYKQSCR. Residues 1091-1160 adopt a coiled-coil conformation; that stretch reads LDLELDLQAS…RQTRQTKLDY (70 aa).

It belongs to the WWC family. As to quaternary structure, forms homodimers and heterodimers with WWC1 and WWC2. Interacts with DLC1 and PRKCZ. Interacts (via WW domains) with LATS1 and LATS2.

The protein resides in the cytoplasm. Its subcellular location is the cytosol. Its function is as follows. Regulator of the Hippo signaling pathway, also known as the Salvador-Warts-Hippo (SWH) pathway. Enhances phosphorylation of LATS1 and YAP1 and negatively regulates cell proliferation and organ growth due to a suppression of the transcriptional activity of YAP1, the major effector of the Hippo pathway. This chain is Protein WWC3, found in Homo sapiens (Human).